We begin with the raw amino-acid sequence, 316 residues long: UDP-3-O-acylglucosamine N-acyltransferase 2 (316 aa).

H230 serves as the catalytic Proton acceptor.

The protein belongs to the transferase hexapeptide repeat family. LpxD subfamily. Homotrimer.

The catalysed reaction is a UDP-3-O-[(3R)-3-hydroxyacyl]-alpha-D-glucosamine + a (3R)-hydroxyacyl-[ACP] = a UDP-2-N,3-O-bis[(3R)-3-hydroxyacyl]-alpha-D-glucosamine + holo-[ACP] + H(+). It participates in bacterial outer membrane biogenesis; LPS lipid A biosynthesis. Functionally, catalyzes the N-acylation of UDP-3-O-acylglucosamine using 3-hydroxyacyl-ACP as the acyl donor. Is involved in the biosynthesis of lipid A, a phosphorylated glycolipid that anchors the lipopolysaccharide to the outer membrane of the cell. This chain is UDP-3-O-acylglucosamine N-acyltransferase 2, found in Sulfurimonas denitrificans (strain ATCC 33889 / DSM 1251) (Thiomicrospira denitrificans (strain ATCC 33889 / DSM 1251)).